A 155-amino-acid polypeptide reads, in one-letter code: Transcriptional repressor NrdR (155 aa).

The segment at Cys-3–Cys-34 is a zinc-finger region. Residues Leu-49–Asp-139 form the ATP-cone domain.

The protein belongs to the NrdR family. Zn(2+) serves as cofactor.

In terms of biological role, negatively regulates transcription of bacterial ribonucleotide reductase nrd genes and operons by binding to NrdR-boxes. This Cereibacter sphaeroides (strain ATCC 17029 / ATH 2.4.9) (Rhodobacter sphaeroides) protein is Transcriptional repressor NrdR.